Reading from the N-terminus, the 220-residue chain is NAD(P)H-quinone oxidoreductase subunit M, chloroplastic (220 aa).

A chloroplast-targeting transit peptide spans 1-37 (MATTASPFLSPAKLSLERRLPRATWTARRSVRFPPVR). The disordered stretch occupies residues 20–91 (LPRATWTARR…PVQPLAESKN (72 aa)). The span at 34–44 (PPVRAQDQQQQ) shows a compositional bias: low complexity.

It belongs to the NDH complex subunit M family. As to quaternary structure, part of the chloroplast NDH complex, composed of a mixture of chloroplast and nucleus encoded subunits. Component of the NDH subcomplex A, at least composed of ndhH, ndhI, ndhJ, ndhK, ndhL, ndhM, ndhN and ndhO.

The protein localises to the plastid. The protein resides in the chloroplast thylakoid membrane. It catalyses the reaction a plastoquinone + NADH + (n+1) H(+)(in) = a plastoquinol + NAD(+) + n H(+)(out). It carries out the reaction a plastoquinone + NADPH + (n+1) H(+)(in) = a plastoquinol + NADP(+) + n H(+)(out). Functionally, NDH shuttles electrons from NAD(P)H:plastoquinone, via FMN and iron-sulfur (Fe-S) centers, to quinones in the photosynthetic chain and possibly in a chloroplast respiratory chain. The immediate electron acceptor for the enzyme in this species is believed to be plastoquinone. Couples the redox reaction to proton translocation, and thus conserves the redox energy in a proton gradient. This is NAD(P)H-quinone oxidoreductase subunit M, chloroplastic from Oryza sativa subsp. indica (Rice).